Here is a 200-residue protein sequence, read N- to C-terminus: 3-isopropylmalate dehydratase small subunit (200 aa).

This sequence belongs to the LeuD family. LeuD type 1 subfamily. Heterodimer of LeuC and LeuD.

It catalyses the reaction (2R,3S)-3-isopropylmalate = (2S)-2-isopropylmalate. It participates in amino-acid biosynthesis; L-leucine biosynthesis; L-leucine from 3-methyl-2-oxobutanoate: step 2/4. Catalyzes the isomerization between 2-isopropylmalate and 3-isopropylmalate, via the formation of 2-isopropylmaleate. This chain is 3-isopropylmalate dehydratase small subunit, found in Yersinia pseudotuberculosis serotype O:1b (strain IP 31758).